The chain runs to 111 residues: uncharacterized protein (111 aa).

3 helical membrane passes run 4–22, 49–71, and 91–108; these read FWIL…QFFI, LLIL…LFFI, and YMYH…LIYV.

The protein localises to the cell membrane. This is an uncharacterized protein from Bacillus subtilis (strain 168).